The chain runs to 394 residues: Queuine tRNA-ribosyltransferase accessory subunit 2 (394 aa).

Zn(2+)-binding residues include Cys-336, Cys-338, Cys-341, and His-367.

The protein belongs to the queuine tRNA-ribosyltransferase family. QTRT2 subfamily. In terms of assembly, heterodimer of a catalytic subunit and an accessory subunit. It depends on Zn(2+) as a cofactor.

It is found in the cytoplasm. Non-catalytic subunit of the queuine tRNA-ribosyltransferase (TGT) that catalyzes the base-exchange of a guanine (G) residue with queuine (Q) at position 34 (anticodon wobble position) in tRNAs with GU(N) anticodons (tRNA-Asp, -Asn, -His and -Tyr), resulting in the hypermodified nucleoside queuosine (7-(((4,5-cis-dihydroxy-2-cyclopenten-1-yl)amino)methyl)-7-deazaguanosine). This Ixodes scapularis (Black-legged tick) protein is Queuine tRNA-ribosyltransferase accessory subunit 2.